Here is a 245-residue protein sequence, read N- to C-terminus: MAVRASFEKNNEIGCFAKLTNTYCLVAIGGSENFYSVFEGELSETMPVIHASIAGCRIIGRMCVGNRHGLLVPNNTTDQELQHIRNCLPDSVRIQRVEERLSALGNVIACNDYVALVHPDLDRETEEILADTLKVEVFRQTVAEQVLVGSYCAFSNQGGLVHAKTSIEDQDELSSLLQVPLVAGTVNRGSEVIAAGMVVNDWCAFCGLDTTSTELSVIESVFRLSETQPSAIATTMRDSLIDSLT.

It belongs to the eIF-6 family. As to quaternary structure, monomer. Associates with the 60S ribosomal subunit.

Its subcellular location is the cytoplasm. It localises to the nucleus. It is found in the nucleolus. In terms of biological role, binds to the 60S ribosomal subunit and prevents its association with the 40S ribosomal subunit to form the 80S initiation complex in the cytoplasm. May also be involved in ribosome biogenesis. This Danio rerio (Zebrafish) protein is Eukaryotic translation initiation factor 6 (eif6).